A 216-amino-acid chain; its full sequence is Serine acetyltransferase (216 aa).

Belongs to the transferase hexapeptide repeat family.

Its subcellular location is the cytoplasm. The enzyme catalyses L-serine + acetyl-CoA = O-acetyl-L-serine + CoA. The protein operates within amino-acid biosynthesis; L-cysteine biosynthesis; L-cysteine from L-serine: step 1/2. This is Serine acetyltransferase (cysE) from Staphylococcus xylosus.